Here is a 502-residue protein sequence, read N- to C-terminus: Zinc finger protein 3 homolog (502 aa).

Basic and acidic residues-rich tracts occupy residues 1–13 (MGTE…PKEE) and 80–93 (PSSE…ESER). 2 disordered regions span residues 1 to 26 (MGTE…SLLE) and 47 to 103 (LEGH…NLVT). Glycyl lysine isopeptide (Lys-Gly) (interchain with G-Cter in SUMO2) cross-links involve residues Lys-6 and Lys-11. C2H2-type zinc fingers lie at residues 141–163 (HTCK…MRVH), 169–191 (FECK…LRIH), 197–219 (FACN…HRIH), 225–247 (YKCE…QRIH), 253–275 (YECN…QRIH), 281–303 (HECN…QKIH), 309–331 (YLCN…QRIH), 337–359 (YECN…IRIH), 365–387 (YVCK…ERIH), 393–415 (YECF…QRIH), 421–443 (HQCN…QKIH), 449–471 (YECS…QRIH), and 477–499 (YECQ…QSVH).

The protein belongs to the krueppel C2H2-type zinc-finger protein family.

The protein localises to the nucleus. In terms of biological role, may be involved in transcriptional regulation. In Homo sapiens (Human), this protein is Zinc finger protein 3 homolog (ZFP3).